Consider the following 102-residue polypeptide: Secreted RxLR effector protein 61 (102 aa).

The signal sequence occupies residues 1-22 (MAFQLRIVQHLLHITFLRLPLA). Positions 51–60 (RRLRQLNEHR) match the RxLR-dEER motif.

This sequence belongs to the RxLR effector family.

Its subcellular location is the secreted. It localises to the host chloroplast envelope. It is found in the host cytoplasm. The protein resides in the host nucleus. In terms of biological role, effector that partially suppresses the tobacco programmed cell death induced by cell death-inducing proteins. In Plasmopara viticola (Downy mildew of grapevine), this protein is Secreted RxLR effector protein 61.